The chain runs to 622 residues: Pyranose 2-oxidase (622 aa).

The N-terminal stretch at 1–28 is a signal peptide; the sequence is MSTSSSDPFYNFAKTSFKSAAAQKASAT. Residues 29–38 constitute a propeptide that is removed on maturation; that stretch reads SLPPLPGPDQ. A Tele-8alpha-FAD histidine modification is found at histidine 167. Residues glutamine 448 and histidine 450 each contribute to the substrate site. Histidine 548 functions as the Proton acceptor in the catalytic mechanism. The active site involves asparagine 593.

This sequence belongs to the GMC oxidoreductase family. As to quaternary structure, homotetramer. The cofactor is FAD.

It localises to the periplasm. The catalysed reaction is D-glucose + O2 = 2-dehydro-D-glucose + H2O2. Its function is as follows. Catalyzes the oxidation of various aldopyranoses and disaccharides on carbon-2 to the corresponding 2-keto sugars concomitant with the reduction of O(2) to H(2)O(2). Plays an important role in lignin degradation of wood rot fungi by supplying the essential cosubstrate H(2)O(2) for the ligninolytic peroxidases, lignin peroxidase and manganese-dependent peroxidase. The polypeptide is Pyranose 2-oxidase (p2ox) (Trametes pubescens (White-rot fungus)).